The chain runs to 469 residues: MRYISTRGQAPALNFEDVLLAGLASDGGLYVPENLPRFTLEEIASWVGLPYHELAFRVMRPFVAGSIADADFKKILEETYGVFAHDAVAPLRQLNGNEWVLELFHGPTLAFKDFALQLLGRLLDHVLAKRGERVVIMGATSGDTGSAAIEGCRRCDNVDIFIMHPHNRVSEVQRRQMTTILGDNIHNIAIEGNFDDCQEMVKASFADQGFLKGTRLVAVNSINWARIMAQIVYYFHAALQLGAPHRSVAFSVPTGNFGDIFAGYLARNMGLPVSQLIVATNRNDILHRFMSGNRYDKDTLHPSLSPSMDIMVSSNFERLLFDLHGRNGKAVAELLDAFKASGKLSVEDQRWTEARKLFDSLAVSDEQTCETIAEVYRSSGELLDPHTAIGVRAARECRRSLSVPMVTLGTAHPVKFPEAVEKAGIGQAPALPAHLADLFEREERCTVLPNELAKVQAFVSQHGNRGKPL.

K112 carries the N6-(pyridoxal phosphate)lysine modification.

This sequence belongs to the threonine synthase family. Requires pyridoxal 5'-phosphate as cofactor.

The enzyme catalyses O-phospho-L-homoserine + H2O = L-threonine + phosphate. It functions in the pathway amino-acid biosynthesis; L-threonine biosynthesis; L-threonine from L-aspartate: step 5/5. In terms of biological role, catalyzes the gamma-elimination of phosphate from L-phosphohomoserine and the beta-addition of water to produce L-threonine. In Pseudomonas aeruginosa (strain ATCC 15692 / DSM 22644 / CIP 104116 / JCM 14847 / LMG 12228 / 1C / PRS 101 / PAO1), this protein is Threonine synthase (thrC).